The chain runs to 545 residues: Chaperonin GroEL 1 (545 aa).

Residues 29–32, 86–90, glycine 413, 477–479, and aspartate 493 each bind ATP; these read TLGP, DGTTT, and NAA.

It belongs to the chaperonin (HSP60) family. In terms of assembly, forms a cylinder of 14 subunits composed of two heptameric rings stacked back-to-back. Interacts with the co-chaperonin GroES.

The protein localises to the cytoplasm. It carries out the reaction ATP + H2O + a folded polypeptide = ADP + phosphate + an unfolded polypeptide.. Functionally, together with its co-chaperonin GroES, plays an essential role in assisting protein folding. The GroEL-GroES system forms a nano-cage that allows encapsulation of the non-native substrate proteins and provides a physical environment optimized to promote and accelerate protein folding. The sequence is that of Chaperonin GroEL 1 from Arthrobacter sp. (strain FB24).